The primary structure comprises 514 residues: Transmembrane protein 117 (514 aa).

The Cytoplasmic portion of the chain corresponds to 1–15; the sequence is MGKDFRYYFQHPWSR. A helical transmembrane segment spans residues 16–36; sequence MIVAYLVIFFNFLIFAEDPVS. Residues 37–65 are Extracellular-facing; the sequence is HSQTEANVIVVGNCFSFVTNKYPRGVGWR. A helical membrane pass occupies residues 66-86; sequence ILKVLLWLLAILIGLIAGKFL. Residues 87 to 110 are Cytoplasmic-facing; the sequence is FHQRLFGQLLRLKMFREDHGSWMT. The chain crosses the membrane as a helical span at residues 111 to 131; it reads MFFSTILFLFIFSHIYNTILL. The Extracellular portion of the chain corresponds to 132-154; the sequence is MDGNMGAYLITDYMGIRNESFMK. The helical transmembrane segment at 155–175 threads the bilayer; it reads LAAVGTWMGDFVTAWMVTDMM. Over 176 to 198 the chain is Cytoplasmic; it reads LQDKPYPDWGKSARAFWKKGNVR. A helical membrane pass occupies residues 199 to 219; it reads IILFWTVLFTLTSVVVLVITT. Over 220 to 239 the chain is Extracellular; sequence DWISWDKLNRGFLPSDEVSR. Residues 240-260 form a helical membrane-spanning segment; it reads AFLASFILVFDLLIVMQDWEF. The Cytoplasmic segment spans residues 261–295; that stretch reads PHFMGDVDVNLPGLHTPHMQFKIPFFQKIFKEEYR. The helical transmembrane segment at 296–316 threads the bilayer; the sequence is IHITGKWFNYGIIFLVLILDL. Topologically, residues 317 to 394 are extracellular; sequence NMWKNQIFYK…FIGASLDVKC (78 aa). N-linked (GlcNAc...) asparagine glycosylation is found at N353 and N371. A helical transmembrane segment spans residues 395-415; that stretch reads LAFVPSLIAFVWFGFFIWFFG. Residues 416 to 514 lie on the Cytoplasmic side of the membrane; that stretch reads RFLKNEQGME…PAASQRMRTN (99 aa). The disordered stretch occupies residues 430 to 450; it reads TYTRMKRKSPSEHSKDMGITR. The span at 438–448 shows a compositional bias: basic and acidic residues; sequence SPSEHSKDMGI. T453 carries the post-translational modification Phosphothreonine. Residues 494 to 514 are disordered; that stretch reads ESTSEVEAEQEPAASQRMRTN.

Belongs to the TMEM117 family.

The protein localises to the cell membrane. Involved in endoplasmic reticulum (ER) stress-induced cell death pathway. This chain is Transmembrane protein 117 (Tmem117), found in Mus musculus (Mouse).